We begin with the raw amino-acid sequence, 133 residues long: Small ribosomal subunit protein uS11 (133 aa).

This sequence belongs to the universal ribosomal protein uS11 family. In terms of assembly, part of the 30S ribosomal subunit. Interacts with proteins S7 and S18. Binds to IF-3.

Located on the platform of the 30S subunit, it bridges several disparate RNA helices of the 16S rRNA. Forms part of the Shine-Dalgarno cleft in the 70S ribosome. The polypeptide is Small ribosomal subunit protein uS11 (Shouchella clausii (strain KSM-K16) (Alkalihalobacillus clausii)).